A 358-amino-acid polypeptide reads, in one-letter code: 4-hydroxy-3-methylbut-2-en-1-yl diphosphate synthase (flavodoxin) (358 aa).

The [4Fe-4S] cluster site is built by Cys-265, Cys-268, Cys-300, and Glu-307.

This sequence belongs to the IspG family. It depends on [4Fe-4S] cluster as a cofactor.

It carries out the reaction (2E)-4-hydroxy-3-methylbut-2-enyl diphosphate + oxidized [flavodoxin] + H2O + 2 H(+) = 2-C-methyl-D-erythritol 2,4-cyclic diphosphate + reduced [flavodoxin]. It functions in the pathway isoprenoid biosynthesis; isopentenyl diphosphate biosynthesis via DXP pathway; isopentenyl diphosphate from 1-deoxy-D-xylulose 5-phosphate: step 5/6. In terms of biological role, converts 2C-methyl-D-erythritol 2,4-cyclodiphosphate (ME-2,4cPP) into 1-hydroxy-2-methyl-2-(E)-butenyl 4-diphosphate. This is 4-hydroxy-3-methylbut-2-en-1-yl diphosphate synthase (flavodoxin) from Maridesulfovibrio salexigens (strain ATCC 14822 / DSM 2638 / NCIMB 8403 / VKM B-1763) (Desulfovibrio salexigens).